Here is a 231-residue protein sequence, read N- to C-terminus: Sensory transduction protein BceR (231 aa).

One can recognise a Response regulatory domain in the interval 3-116 (KLLLIEDDES…VLIAKIQAMF (114 aa)). Position 52 is a 4-aspartylphosphate (D52). The segment at residues 127 to 225 (STIKTWCGAA…KVGQGYIAKE (99 aa)) is a DNA-binding region (ompR/PhoB-type).

In terms of processing, phosphorylated by BceS.

Its subcellular location is the cytoplasm. Its function is as follows. Member of the two-component regulatory system BceS/BceR involved in the regulation of bacitracin resistance. When activated by BceS, binds to the upstream region of the bceAB promoter and up-regulates the expression of these two genes. This Bacillus subtilis (strain 168) protein is Sensory transduction protein BceR (bceR).